The chain runs to 336 residues: 4-hydroxy-2-oxovalerate aldolase (336 aa).

Residues 5–255 form the Pyruvate carboxyltransferase domain; that stretch reads IRIIDSTLRD…ETGVDLYKIM (251 aa). Residue 13 to 14 participates in substrate binding; it reads RD. A Mn(2+)-binding site is contributed by aspartate 14. The Proton acceptor role is filled by histidine 17. Positions 167 and 194 each coordinate substrate. Positions 194 and 196 each coordinate Mn(2+). Residue tyrosine 285 coordinates substrate.

Belongs to the 4-hydroxy-2-oxovalerate aldolase family.

The enzyme catalyses (S)-4-hydroxy-2-oxopentanoate = acetaldehyde + pyruvate. In Carboxydothermus hydrogenoformans (strain ATCC BAA-161 / DSM 6008 / Z-2901), this protein is 4-hydroxy-2-oxovalerate aldolase (mhpE).